We begin with the raw amino-acid sequence, 230 residues long: 5'-methylthioadenosine/S-adenosylhomocysteine nucleosidase (230 aa).

Glu-12 functions as the Proton acceptor in the catalytic mechanism. Substrate contacts are provided by residues Gly-78, Met-153, and 174 to 175 (ME). Asp-198 functions as the Proton donor in the catalytic mechanism.

This sequence belongs to the PNP/UDP phosphorylase family. MtnN subfamily.

It catalyses the reaction S-adenosyl-L-homocysteine + H2O = S-(5-deoxy-D-ribos-5-yl)-L-homocysteine + adenine. The enzyme catalyses S-methyl-5'-thioadenosine + H2O = 5-(methylsulfanyl)-D-ribose + adenine. The catalysed reaction is 5'-deoxyadenosine + H2O = 5-deoxy-D-ribose + adenine. The protein operates within amino-acid biosynthesis; L-methionine biosynthesis via salvage pathway; S-methyl-5-thio-alpha-D-ribose 1-phosphate from S-methyl-5'-thioadenosine (hydrolase route): step 1/2. Catalyzes the irreversible cleavage of the glycosidic bond in both 5'-methylthioadenosine (MTA) and S-adenosylhomocysteine (SAH/AdoHcy) to adenine and the corresponding thioribose, 5'-methylthioribose and S-ribosylhomocysteine, respectively. Also cleaves 5'-deoxyadenosine, a toxic by-product of radical S-adenosylmethionine (SAM) enzymes, into 5-deoxyribose and adenine. In Lysinibacillus sphaericus (strain C3-41), this protein is 5'-methylthioadenosine/S-adenosylhomocysteine nucleosidase.